Here is a 119-residue protein sequence, read N- to C-terminus: Large ribosomal subunit protein bL20 (119 aa).

The protein belongs to the bacterial ribosomal protein bL20 family.

Functionally, binds directly to 23S ribosomal RNA and is necessary for the in vitro assembly process of the 50S ribosomal subunit. It is not involved in the protein synthesizing functions of that subunit. The sequence is that of Large ribosomal subunit protein bL20 from Deinococcus geothermalis (strain DSM 11300 / CIP 105573 / AG-3a).